The primary structure comprises 130 residues: Small ribosomal subunit protein uS9 (130 aa).

It belongs to the universal ribosomal protein uS9 family.

This chain is Small ribosomal subunit protein uS9, found in Bacillus velezensis (strain DSM 23117 / BGSC 10A6 / LMG 26770 / FZB42) (Bacillus amyloliquefaciens subsp. plantarum).